The chain runs to 364 residues: Chaperone protein DnaJ (364 aa).

The region spanning 4–69 (DYYEILGLSK…NKKAKYDRFG (66 aa)) is the J domain. The CR-type zinc finger occupies 135 to 213 (GYKNNINITR…CKGKGRITNQ (79 aa)). The Zn(2+) site is built by C148, C151, C165, C168, C187, C190, C201, and C204. CXXCXGXG motif repeat units lie at residues 148–155 (CHSCLGKK), 165–172 (CNMCNGSG), 187–194 (CSKCYGEG), and 201–208 (CKSCKGKG).

It belongs to the DnaJ family. As to quaternary structure, homodimer. It depends on Zn(2+) as a cofactor.

It is found in the cytoplasm. Participates actively in the response to hyperosmotic and heat shock by preventing the aggregation of stress-denatured proteins and by disaggregating proteins, also in an autonomous, DnaK-independent fashion. Unfolded proteins bind initially to DnaJ; upon interaction with the DnaJ-bound protein, DnaK hydrolyzes its bound ATP, resulting in the formation of a stable complex. GrpE releases ADP from DnaK; ATP binding to DnaK triggers the release of the substrate protein, thus completing the reaction cycle. Several rounds of ATP-dependent interactions between DnaJ, DnaK and GrpE are required for fully efficient folding. Also involved, together with DnaK and GrpE, in the DNA replication of plasmids through activation of initiation proteins. This is Chaperone protein DnaJ from Borrelia garinii subsp. bavariensis (strain ATCC BAA-2496 / DSM 23469 / PBi) (Borreliella bavariensis).